Here is a 100-residue protein sequence, read N- to C-terminus: Urease subunit gamma (100 aa).

The protein belongs to the urease gamma subunit family. Heterotrimer of UreA (gamma), UreB (beta) and UreC (alpha) subunits. Three heterotrimers associate to form the active enzyme.

The protein resides in the cytoplasm. The catalysed reaction is urea + 2 H2O + H(+) = hydrogencarbonate + 2 NH4(+). The protein operates within nitrogen metabolism; urea degradation; CO(2) and NH(3) from urea (urease route): step 1/1. The sequence is that of Urease subunit gamma from Pseudomonas syringae pv. tomato (strain ATCC BAA-871 / DC3000).